The chain runs to 311 residues: Pyrimidine-specific ribonucleoside hydrolase RihA (311 aa).

The active site involves histidine 240.

This sequence belongs to the IUNH family. RihA subfamily.

Functionally, hydrolyzes cytidine or uridine to ribose and cytosine or uracil, respectively. This Salmonella gallinarum (strain 287/91 / NCTC 13346) protein is Pyrimidine-specific ribonucleoside hydrolase RihA.